Here is an 88-residue protein sequence, read N- to C-terminus: HssA/B-like protein 9 (88 aa).

Polar residues predominate over residues 1–14 (MSILSALTSISNPM). Residues 1–26 (MSILSALTSISNPMKSSKSSVANGGG) form a disordered region.

The protein belongs to the hssA/B family.

The polypeptide is HssA/B-like protein 9 (hssl9) (Dictyostelium discoideum (Social amoeba)).